Consider the following 484-residue polypeptide: F-box/LRR-repeat protein At3g59210 (484 aa).

Residues 6-54 (KDIINCLPDNLLCQILSNLSTKEAALTSLLSKRWRYLFALVPNLDFDVL) enclose the F-box domain. 5 LRR repeats span residues 144–170 (KIGPKDGPRVKLRNVCLPKLKTLNLDS), 172–197 (VFEEGKIGFAKLLSGCPVLEELSLLN), 205–234 (SCSVSSKILKRLTLYCAHSSRNPKSVSFDT), 303–334 (TLYLSYDTLETLNLCCQVIPVFNNLTHLTIES), and 335–360 (HPELGWESLPNLLKSCPNLGTLVFQG).

The protein is F-box/LRR-repeat protein At3g59210 of Arabidopsis thaliana (Mouse-ear cress).